A 117-amino-acid chain; its full sequence is Neurotoxic enhancer CSTX-13 (117 aa).

Positions 1–20 (MKVLVIFAVLSLVIFSNCSA) are cleaved as a signal peptide. The propeptide occupies 21-47 (ETDEDFFGEESFEADDIIPFIAKEQVR). Intrachain disulfides connect Cys-50–Cys-65, Cys-57–Cys-74, Cys-64–Cys-95, and Cys-76–Cys-93. The propeptide occupies 82–87 (RSETAR). Thr-116 bears the Threonine amide mark.

This sequence belongs to the neurotoxin 19 (CSTX) family. 12 subfamily. In terms of assembly, heterodimer of A and B chains; disulfide-linked. Interacts with CSTX-1 (AC P81694) (Kd=430 nM), and with CSTX-9 (AC P58604) (Kd=370 nM). As to expression, expressed by the venom gland.

It is found in the secreted. Its subcellular location is the target cell membrane. Functionally, synergistic toxin that induces or increases a cytolytic effect when combined with CSTX-1 (AC P81694) or CSTX-9 (AC P58604). When alone, has a weak insecticidal activity, with an unknown molecular target. The sequence is that of Neurotoxic enhancer CSTX-13 from Cupiennius salei (American wandering spider).